A 336-amino-acid chain; its full sequence is Alpha-glucoside transport system permease protein AglF (336 aa).

Transmembrane regions (helical) follow at residues 4–24 (LIAA…YFWS), 55–75 (PWLF…YPVV), 113–133 (FLWL…IAAL), 146–166 (LIFM…KFIY), 176–196 (IGLL…WITL), 202–222 (FFLM…ILSA), 258–278 (IAVV…IVLA), and 304–324 (FGRG…IMIW). An ABC transmembrane type-1 domain is found at 109-325 (IFNNFLWLLV…ILVVPIMIWN (217 aa)).

Belongs to the binding-protein-dependent transport system permease family. MalFG subfamily.

Its subcellular location is the cell inner membrane. Its function is as follows. Part of the binding-protein-dependent transport system for alpha-glucosides such as sucrose, maltose and trehalose. Probably responsible for the translocation of the substrate across the membrane. This is Alpha-glucoside transport system permease protein AglF (aglF) from Rhizobium meliloti (strain 1021) (Ensifer meliloti).